Here is a 357-residue protein sequence, read N- to C-terminus: tRNA N6-adenosine threonylcarbamoyltransferase (357 aa).

2 residues coordinate Fe cation: H120 and H124. Substrate is bound by residues L143–G147, D176, G189, and N289. D317 serves as a coordination point for Fe cation.

It belongs to the KAE1 / TsaD family. Requires Fe(2+) as cofactor.

The protein localises to the cytoplasm. It catalyses the reaction L-threonylcarbamoyladenylate + adenosine(37) in tRNA = N(6)-L-threonylcarbamoyladenosine(37) in tRNA + AMP + H(+). Required for the formation of a threonylcarbamoyl group on adenosine at position 37 (t(6)A37) in tRNAs that read codons beginning with adenine. Is involved in the transfer of the threonylcarbamoyl moiety of threonylcarbamoyl-AMP (TC-AMP) to the N6 group of A37, together with TsaE and TsaB. TsaD likely plays a direct catalytic role in this reaction. The chain is tRNA N6-adenosine threonylcarbamoyltransferase from Polynucleobacter necessarius subsp. necessarius (strain STIR1).